The chain runs to 5654 residues: Mucin-5AC (5654 aa).

The first 27 residues, 1–27 (MSVGRRKLALLWALALALACTRHTGHA), serve as a signal peptide directing secretion. The segment at 27-49 (AQDGSSESSYKHHPALSPIARGP) is disordered. The VWFD 1 domain occupies 79 to 249 (RVCSTWGSFH…KMDDPTDQCQ (171 aa)). 2 disulfide bridges follow: cysteine 81–cysteine 211 and cysteine 103–cysteine 248. Residue glutamate 198 participates in Cu(2+) binding. N-linked (GlcNAc...) asparagine glycans are attached at residues asparagine 205 and asparagine 258. Cu(2+) is bound by residues histidine 320 and histidine 367. Residues 338–394 (CPNNMQYHECRSPCADTCSNQEHSRACEDHCVAGCFCPEGTVLDDIGQTGCVPVSKC) form the TIL 1 domain. The VWFC 1 domain occupies 394-465 (CACVYNGAAY…CSYVLTKPCD (72 aa)). Asparagine 415 is a glycosylation site (N-linked (GlcNAc...) asparagine). The region spanning 432–607 (GTCSVLGGAH…NTFKTQAACP (176 aa)) is the VWFD 2 domain. 3 disulfides stabilise this stretch: cysteine 434/cysteine 571, cysteine 456/cysteine 606, and cysteine 478/cysteine 486. An N-linked (GlcNAc...) asparagine glycan is attached at asparagine 524. TIL domains follow at residues 704-761 (CPKS…ASNC) and 818-863 (DTGA…AEDC). In terms of domain architecture, VWFD 3 spans 901–1072 (ATCAVYGDGH…NSWKLSPSCP (172 aa)). Intrachain disulfides connect cysteine 903–cysteine 1036, cysteine 925–cysteine 1071, cysteine 934–cysteine 1033, and cysteine 953–cysteine 960. N-linked (GlcNAc...) asparagine glycosylation is present at asparagine 1308. A disordered region spans residues 1336 to 1377 (LVVSSTHTPSNGPSSAHTGPPSSAWPTTAGTSPRTRLPTASA). Residues 1338–1377 (VSSTHTPSNGPSSAHTGPPSSAWPTTAGTSPRTRLPTASA) show a composition bias toward polar residues. Residues 1383–1481 (CGEKCLWSPW…RVQCCTPLPC (99 aa)) form a Cys-rich subdomain 1 repeat. Residues 1383–4731 (CGEKCLWSPW…VLCCETPRGC (3349 aa)) form a 9 X Cys-rich subdomain repeats region. Tryptophan 1389 carries a C-linked (Man) tryptophan glycan. Composition is skewed to low complexity over residues 1483–1539 (TSSS…TFST) and 1547–1575 (ATST…PSTS). A disordered region spans residues 1483–1575 (TSSSPAQTTP…KPTPTEPSTS (93 aa)). One copy of the Cys-rich subdomain 2 repeat lies at 1577–1677 (CLQELCTWTE…IQCCETVNVC (101 aa)). Residue tryptophan 1584 is glycosylated (C-linked (Man) tryptophan). The segment at 1688-1733 (ATTRPTPHPTGAQTQTTFTTHMPSASTEQPTATSRGGPTATSVTQG) is disordered. The segment covering 1697-1707 (TGAQTQTTFTT) has biased composition (low complexity). A compositionally biased stretch (polar residues) spans 1708–1733 (HMPSASTEQPTATSRGGPTATSVTQG). Residues 1743–1847 (CHPRCTWTKW…VLCCETPRGC (105 aa)) form a Cys-rich subdomain 3 repeat. Tryptophan 1749 carries a C-linked (Man) tryptophan glycan. Residues 1849-1948 (MTSTPGSTSS…KPTPTEPSTS (100 aa)) are disordered. 2 stretches are compositionally biased toward low complexity: residues 1850–1912 (TSTP…TFST) and 1920–1948 (ATST…PSTS). The Cys-rich subdomain 4 repeat unit spans residues 1950–2050 (CLQELCTWTE…IQCCETVNVC (101 aa)). Tryptophan 1957 carries a C-linked (Man) tryptophan glycan. The segment at 2059–2110 (TVATTRPTPHPTGAQTQTTFTTHMPSASTEQPTATSRGGPTATSVTQGTHTT) is disordered. The segment covering 2070-2080 (TGAQTQTTFTT) has biased composition (low complexity). Polar residues predominate over residues 2081-2110 (HMPSASTEQPTATSRGGPTATSVTQGTHTT). The stretch at 2116 to 2220 (CHPRCTWTTW…VLCCETPKGC (105 aa)) is one Cys-rich subdomain 5 repeat. Tryptophan 2122 carries a C-linked (Man) tryptophan glycan. A compositionally biased stretch (low complexity) spans 2224–2234 (STPVTAPSTPS). The interval 2224–3214 (STPVTAPSTP…SHVSISKTTH (991 aa)) is disordered. The segment covering 2235 to 2249 (GRATSPTQSTSSWQK) has biased composition (polar residues). Composition is skewed to low complexity over residues 2250–3184 (SRTT…TPGP) and 3192–3214 (PTTS…KTTH). The 107 X 8 AA approximate tandem repeats of T-T-S-T-T-S-A-P stretch occupies residues 2257 to 3200 (TTSTTSTPQT…VPTTSTASVS (944 aa)). O-linked (GalNAc) threonine glycosylation is found at threonine 2395, threonine 2405, threonine 2451, threonine 2461, threonine 2531, threonine 2541, threonine 2571, threonine 2581, threonine 2699, threonine 2709, threonine 2883, threonine 2893, threonine 2979, threonine 2989, threonine 3067, and threonine 3077. One copy of the Cys-rich subdomain 6 repeat lies at 3222 to 3326 (CHLRCTWTKW…VLCCETPKGC (105 aa)). C-linked (Man) tryptophan glycosylation occurs at tryptophan 3228. Over residues 3329–3340 (TSTPVTAPSTPS) the composition is skewed to low complexity. The tract at residues 3329 to 3515 (TSTPVTAPST…SVSKTTHSQP (187 aa)) is disordered. The span at 3341–3355 (GRATSPTQSTSSWQK) shows a compositional bias: polar residues. The span at 3356–3513 (SRTTTLVTTS…HVSVSKTTHS (158 aa)) shows a compositional bias: low complexity. The segment at 3363 to 3498 (TTSTTSTPQT…VTTTSTASVS (136 aa)) is 17 X 8 AA approximate tandem repeats of T-T-S-T-T-S-A-P. Residues 3520–3660 (CHPRCTWTKW…WQKSRTTTLV (141 aa)) form a Cys-rich subdomain 7 repeat. Tryptophan 3526 is a glycosylation site (C-linked (Man) tryptophan). Over residues 3628–3638 (STSVTAPSTPS) the composition is skewed to low complexity. Residues 3628-3951 (STSVTAPSTP…KTTHSQPVTR (324 aa)) form a disordered region. Polar residues predominate over residues 3639-3660 (GRATSPTQSTSSWQKSRTTTLV). Positions 3661–3931 (TSSITSTTQT…VPTTSTASVS (271 aa)) are 34 X 8 AA approximate tandem repeats of T-T-S-T-T-S-A-P. The span at 3661 to 3946 (TSSITSTTQT…HVSVSKTTHS (286 aa)) shows a compositional bias: low complexity. Asparagine 3774 carries an N-linked (GlcNAc...) asparagine glycan. Residues 3953–4057 (CHPRCTWTKW…VLCCETPKGC (105 aa)) form a Cys-rich subdomain 8 repeat. Tryptophan 3959 carries a C-linked (Man) tryptophan glycan. Low complexity predominate over residues 4060 to 4071 (TSTPVTAPSTPS). The interval 4060–4625 (TSTPVTAPST…KTTHSQPVTS (566 aa)) is disordered. The span at 4072-4088 (GRATSPTQSTSSWQKSR) shows a compositional bias: polar residues. Over residues 4089 to 4610 (TTTLVTTSTT…TTPVSKTSTS (522 aa)) the composition is skewed to low complexity. Residues 4093–4595 (VTTSTTSTPQ…TSGPGTTPSP (503 aa)) are 58 X 8 AA approximate tandem repeats of T-T-S-T-T-S-A-P. O-linked (GalNAc) threonine glycans are attached at residues threonine 4224, threonine 4234, threonine 4296, threonine 4306, threonine 4320, threonine 4330, threonine 4376, threonine 4386, threonine 4440, threonine 4450, threonine 4480, threonine 4490, threonine 4512, threonine 4522, threonine 4568, and threonine 4578. A compositionally biased stretch (polar residues) spans 4611-4624 (HLSVSKTTHSQPVT). Residues 4627–4731 (CHPLCAWTKW…VLCCETPRGC (105 aa)) form a Cys-rich subdomain 9 repeat. Tryptophan 4633 carries C-linked (Man) tryptophan glycosylation. Residues 4830–4849 (TLPPAPATSPSISTSEPVTE) are disordered. One can recognise a VWFC 2 domain in the interval 4852–4918 (CPNAVPPRKK…DGCCHHYQCQ (67 aa)). 2 N-linked (GlcNAc...) asparagine glycosylation sites follow: asparagine 4869 and asparagine 4942. The VWFD 4 domain occupies 4919 to 5103 (CVCSGWGDPH…VSIPDQPACH (185 aa)). 3 disulfide bridges follow: cysteine 4921–cysteine 5063, cysteine 4943–cysteine 5102, and cysteine 4967–cysteine 4975. N-linked (GlcNAc...) asparagine glycans are attached at residues asparagine 5057, asparagine 5093, and asparagine 5236. The VWFC 3 domain occupies 5276–5345 (PRCLGPHGEP…GQCCPQYSCA (70 aa)). 5 N-linked (GlcNAc...) asparagine glycosylation sites follow: asparagine 5347, asparagine 5377, asparagine 5386, asparagine 5455, and asparagine 5528. The VWFC 4 domain occupies 5381–5448 (TVCSINGTLY…QSGQCCGTCV (68 aa)). Intrachain disulfides connect cysteine 5532–cysteine 5582, cysteine 5546–cysteine 5596, cysteine 5557–cysteine 5612, and cysteine 5561–cysteine 5614. Residues 5532–5620 (CAVYHRSLII…ECGCMGRRCP (89 aa)) form the CTCK domain. Residue asparagine 5591 is glycosylated (N-linked (GlcNAc...) asparagine). The disordered stretch occupies residues 5622-5654 (PGDTQHSEEAEPEPSQEAESGSWERGVPVSPMH).

Homomultimer; disulfide-linked. The N- and C-terminus mediate their assembly into higher order structures to form filaments. The CTCK domains of two polypeptides associate in the endoplasmic reticulum to generate intermolecularly disulfide-bonded dimers. These dimers progress to the Golgi apparatus, which is a more acidic environment than the endoplasmic reticulum. Under acidic conditions, the N-termini form non-covalent intermolecular interactions that juxtapose assemblies from different CTCK-linked dimers to produce long, disulfide-linked polymers that remain highly compact until secretion. Post-translationally, C-, O- and N-glycosylated. O-glycosylated on the second and last Thr of the Thr-/Ser-rich tandem repeats TTPSPVPTTSTTSA. One form of glycosylation is also known as Lewis B (LeB) blood group antigen, a tetrasaccharide consisting of N-acetylglucosamine having a fucosyl residue attached. It has a role as an epitope and antigen and functions as a receptor for H.pylori binding and facilitates infection. C-mannosylation in the Cys-rich subdomains may be required for proper folding of these regions and for export from the endoplasmic reticulum during biosynthesis. In terms of processing, proteolytic cleavage in the C-terminal is initiated early in the secretory pathway and does not involve a serine protease. The extent of cleavage is increased in the acidic parts of the secretory pathway. Cleavage generates a reactive group which could link the protein to a primary amide. Highly expressed in surface mucosal cells of respiratory tract and stomach epithelia. Overexpressed in a number of carcinomas. Also expressed in Barrett's esophagus epithelium and in the proximal duodenum.

The protein resides in the secreted. Gel-forming glycoprotein of gastric and respiratory tract epithelia that protects the mucosa from infection and chemical damage by binding to inhaled microorganisms and particles that are subsequently removed by the mucociliary system. Interacts with H.pylori in the gastric epithelium, Barrett's esophagus as well as in gastric metaplasia of the duodenum (GMD). This Homo sapiens (Human) protein is Mucin-5AC.